A 203-amino-acid polypeptide reads, in one-letter code: Ras-related protein Rab-7a (203 aa).

GTP contacts are provided by residues 15 to 22, 34 to 40, 63 to 67, 125 to 128, and 157 to 158; these read GDSGVGKT, SNQYKAT, DTAGQ, NKID, and AK. The Effector region motif lies at 37 to 45; the sequence is YKATIGADF. Residues Cys202 and Cys203 are each lipidated (S-geranylgeranyl cysteine).

Belongs to the small GTPase superfamily. Rab family.

It is found in the late endosome membrane. Its subcellular location is the lysosome membrane. It localises to the cytoplasmic vesicle. The protein resides in the autophagosome membrane. The protein localises to the lipid droplet. The catalysed reaction is GTP + H2O = GDP + phosphate + H(+). Functionally, small GTPase which cycles between active GTP-bound and inactive GDP-bound states. In its active state, binds to a variety of effector proteins playing a key role in the regulation of endo-lysosomal trafficking. Governs early-to-late endosomal maturation, microtubule minus-end as well as plus-end directed endosomal migration and positioning, and endosome-lysosome transport through different protein-protein interaction cascades. Involved in lipophagy, a cytosolic lipase-independent autophagic pathway. The protein is Ras-related protein Rab-7a (rab7A) of Dictyostelium discoideum (Social amoeba).